The chain runs to 122 residues: MDQLIQVVEAAQERQDLPEIRPGDTIKMQLRVIEGEKERLQAYEGVIISDSGAGTNRTITVRKISNGVGVERIIPLNSPNIESIEVRKYGKTRRAKLSYLRKRTGKAALRVKERKVSAPAGK.

The protein belongs to the bacterial ribosomal protein bL19 family.

This protein is located at the 30S-50S ribosomal subunit interface and may play a role in the structure and function of the aminoacyl-tRNA binding site. The chain is Large ribosomal subunit protein bL19 from Prosthecochloris aestuarii (strain DSM 271 / SK 413).